The primary structure comprises 549 residues: Glucoamylase, intracellular sporulation-specific (549 aa).

W198 is a substrate binding site. D261 serves as the catalytic Proton acceptor. E264 acts as the Proton donor in catalysis.

This sequence belongs to the glycosyl hydrolase 15 family.

It catalyses the reaction Hydrolysis of terminal (1-&gt;4)-linked alpha-D-glucose residues successively from non-reducing ends of the chains with release of beta-D-glucose.. This chain is Glucoamylase, intracellular sporulation-specific (SGA1), found in Saccharomyces cerevisiae (strain ATCC 204508 / S288c) (Baker's yeast).